A 222-amino-acid polypeptide reads, in one-letter code: Ribosomal RNA small subunit methyltransferase G (222 aa).

S-adenosyl-L-methionine contacts are provided by residues G73, L78, A124–E125, and R137.

Belongs to the methyltransferase superfamily. RNA methyltransferase RsmG family.

The protein resides in the cytoplasm. Its function is as follows. Specifically methylates the N7 position of guanine in position 518 of 16S rRNA. This is Ribosomal RNA small subunit methyltransferase G from Acidothermus cellulolyticus (strain ATCC 43068 / DSM 8971 / 11B).